Consider the following 160-residue polypeptide: Cyclic pyranopterin monophosphate synthase (160 aa).

Residues 75 to 77 (LCH) and 113 to 114 (ME) each bind substrate. The active site involves D128.

It belongs to the MoaC family. As to quaternary structure, homohexamer; trimer of dimers.

It carries out the reaction (8S)-3',8-cyclo-7,8-dihydroguanosine 5'-triphosphate = cyclic pyranopterin phosphate + diphosphate. It functions in the pathway cofactor biosynthesis; molybdopterin biosynthesis. In terms of biological role, catalyzes the conversion of (8S)-3',8-cyclo-7,8-dihydroguanosine 5'-triphosphate to cyclic pyranopterin monophosphate (cPMP). This Methylobacterium nodulans (strain LMG 21967 / CNCM I-2342 / ORS 2060) protein is Cyclic pyranopterin monophosphate synthase.